The sequence spans 446 residues: Tryptophan synthase beta chain 2 (446 aa).

K110 carries the post-translational modification N6-(pyridoxal phosphate)lysine.

The protein belongs to the TrpB family. As to quaternary structure, tetramer of two alpha and two beta chains. It depends on pyridoxal 5'-phosphate as a cofactor.

It catalyses the reaction (1S,2R)-1-C-(indol-3-yl)glycerol 3-phosphate + L-serine = D-glyceraldehyde 3-phosphate + L-tryptophan + H2O. Its pathway is amino-acid biosynthesis; L-tryptophan biosynthesis; L-tryptophan from chorismate: step 5/5. Its function is as follows. The beta subunit is responsible for the synthesis of L-tryptophan from indole and L-serine. In Pyrococcus furiosus (strain ATCC 43587 / DSM 3638 / JCM 8422 / Vc1), this protein is Tryptophan synthase beta chain 2 (trpB2).